The sequence spans 323 residues: MFARQSLRFAQPLKQGFRKYSTEAPSKGKSSLAPIYVAVGLTGLGVGLYRYNSASAEAPPAERPKVFTGGDQGWVDLKLAQIENLSPNTKRLRFEFPDKEAVSGLHVASALLTKFKPHGAEKPVIRPYTPVSDEEQPGYLDLVVKVYPNGPMSEHLHSMNVDQRLEFKGPIPKYPWEANKHKHICLIAGGTGITPMYQLARKIFKDPEDQTKVTLVFGNVREEDILLKKELQELENTYPRRFRAFYVLDHPPKEWTGGKGYITKELLKTVLPEPKEENIKIFVCGPPGMYKSISGPKVSPKDQGELTGILAELGYSKDQVFKF.

A helical transmembrane segment spans residues 32–48 (LAPIYVAVGLTGLGVGL). The 106-residue stretch at 72 to 177 (QGWVDLKLAQ…KGPIPKYPWE (106 aa)) folds into the FAD-binding FR-type domain. 180-215 (KHKHICLIAGGTGITPMYQLARKIFKDPEDQTKVTL) provides a ligand contact to FAD.

This sequence belongs to the flavoprotein pyridine nucleotide cytochrome reductase family. FAD serves as cofactor.

It localises to the mitochondrion outer membrane. It catalyses the reaction 2 Fe(III)-[cytochrome b5] + NADH = 2 Fe(II)-[cytochrome b5] + NAD(+) + H(+). In terms of biological role, may mediate the reduction of outer membrane cytochrome b5. In Neosartorya fischeri (strain ATCC 1020 / DSM 3700 / CBS 544.65 / FGSC A1164 / JCM 1740 / NRRL 181 / WB 181) (Aspergillus fischerianus), this protein is NADH-cytochrome b5 reductase 2 (mcr1).